A 509-amino-acid polypeptide reads, in one-letter code: tRNA (guanine(37)-N(1))-methyltransferase (509 aa).

The N-terminal 57 residues, 1-57 (MVLWILWRPFGFSRRLLKLERHSITESKSLIPLAWTSLTQTLSESPGIFLLGQRKRF), are a transit peptide targeting the mitochondrion. S-adenosyl-L-methionine-binding positions include H289, 327–328 (DL), 355–356 (DG), and N387. The interval 478 to 509 (TKNPENHEDPPLKRQRTAEAFSDEKTQIASNT) is disordered.

It belongs to the class I-like SAM-binding methyltransferase superfamily. TRM5/TYW2 family. In terms of assembly, monomer.

It localises to the mitochondrion matrix. The protein resides in the nucleus. The protein localises to the cytoplasm. It carries out the reaction guanosine(37) in tRNA + S-adenosyl-L-methionine = N(1)-methylguanosine(37) in tRNA + S-adenosyl-L-homocysteine + H(+). Its function is as follows. Involved in mitochondrial tRNA methylation. Specifically methylates the N1 position of guanosine-37 in various tRNAs. Methylation is not dependent on the nature of the nucleoside 5' of the target nucleoside. This is the first step in the biosynthesis of wybutosine (yW), a modified base adjacent to the anticodon of tRNAs and required for accurate decoding. The sequence is that of tRNA (guanine(37)-N(1))-methyltransferase from Macaca mulatta (Rhesus macaque).